We begin with the raw amino-acid sequence, 578 residues long: MKASRFFIGTLKEAPADAEIVSHKLMVRAGMIRRVAGGIYNYLPVGLRSIRKVEAIVREEMNRAGAIELLMPAVQPAELWQESGRWEQYGPELLRFKDRKDNDFVIGPTHEEVVTDIARNQIKSYRQMPVNFYQIQTKFRDEIRPRFGVMRGREFIMKDAYSFDKDAAGLNESYRKMYDAYVRIFTRLGLEFRAVAADSGSIGGNFSHEFHVIADTGEDAIAYCPTSEFAANVEAAEALPLIAERAAPAEAMEKVATPGKAKCEAVAELLSIPLERTIKSIVLATDNEGAEPTIWLVMLRGDHDLNEIKVSKLPGLKNHRFATEQEIVEWFGTPPGYLGPVGTKKPVKVIADRTVANMSDFVVGANEVDYHIAGVNWGRDLPEPEVADVRNVKKGDPSPDGKGVIDICRGIEVGHVFQLGTKYSEAMGATFLDESGKPQPMLMGCYGVGITRILGAAIEQNFDDKGIIWPESIAPFEVVLCPMGYDRSDMVRETADKLYAELVAAGIDVILDDRGERPGVMFADWELIGVPHRLVIGERGLKEGKIEYQGRRDAEATLLPADTAAAAVAEKIRAALAH.

It belongs to the class-II aminoacyl-tRNA synthetase family. ProS type 1 subfamily. Homodimer.

It localises to the cytoplasm. The enzyme catalyses tRNA(Pro) + L-proline + ATP = L-prolyl-tRNA(Pro) + AMP + diphosphate. Its function is as follows. Catalyzes the attachment of proline to tRNA(Pro) in a two-step reaction: proline is first activated by ATP to form Pro-AMP and then transferred to the acceptor end of tRNA(Pro). As ProRS can inadvertently accommodate and process non-cognate amino acids such as alanine and cysteine, to avoid such errors it has two additional distinct editing activities against alanine. One activity is designated as 'pretransfer' editing and involves the tRNA(Pro)-independent hydrolysis of activated Ala-AMP. The other activity is designated 'posttransfer' editing and involves deacylation of mischarged Ala-tRNA(Pro). The misacylated Cys-tRNA(Pro) is not edited by ProRS. The polypeptide is Proline--tRNA ligase (Burkholderia cenocepacia (strain HI2424)).